A 279-amino-acid chain; its full sequence is MKIGYIYAIENNLNDEVYIGSTLRTIEERFSEHKASARRRPTCTFHKFMSLHGIEHFKIIELKKIEVNSFFELQALEESYIRDYGSLNTINGVNKAAVHTRNEILVKRKIYSKECVKLPPLDEVIKIATKASLKKLEINEFIDLFIGEENKWNKMFDSDLSGIHISSLILNQLGYEGEFKNQQTCFKRFLKRNNIIIQEFSSSNPELKLYPSIQEEMKNMKTNVIANRKWLIANPRDLKKIIMKLNTKNGDAIREYYICMDELVQFYSQYSLSYDSNNN.

The region spanning Lys-2 to Ile-90 is the GIY-YIG domain.

The protein belongs to the IIV-6 019R family.

This is an uncharacterized protein from Acheta domesticus (House cricket).